The following is a 411-amino-acid chain: Epoxyqueuosine reductase (411 aa).

Residue Asp171 is the Proton donor of the active site. The region spanning 213–245 (LPLPVDKPQEEQCGRCVACMTTCPTGAIVAPYT) is the 4Fe-4S ferredoxin-type domain. Cys225, Cys228, Cys231, Cys235, Cys251, Cys278, Cys281, and Cys285 together coordinate [4Fe-4S] cluster.

It belongs to the QueG family. In terms of assembly, monomer. Cob(II)alamin serves as cofactor. The cofactor is [4Fe-4S] cluster.

It is found in the cytoplasm. It carries out the reaction epoxyqueuosine(34) in tRNA + AH2 = queuosine(34) in tRNA + A + H2O. The protein operates within tRNA modification; tRNA-queuosine biosynthesis. Its function is as follows. Catalyzes the conversion of epoxyqueuosine (oQ) to queuosine (Q), which is a hypermodified base found in the wobble positions of tRNA(Asp), tRNA(Asn), tRNA(His) and tRNA(Tyr). This Yersinia pestis protein is Epoxyqueuosine reductase.